A 244-amino-acid polypeptide reads, in one-letter code: Ribonuclease 3 (244 aa).

One can recognise an RNase III domain in the interval 5–136; it reads LAELERAIGI…LVGAIYLDQG (132 aa). Glu-49 serves as a coordination point for Mg(2+). Asp-53 is a catalytic residue. Asp-122 and Glu-125 together coordinate Mg(2+). Glu-125 is an active-site residue. Positions 161–229 constitute a DRBM domain; the sequence is DPTTRLQELM…ARKALAAWDK (69 aa).

The protein belongs to the ribonuclease III family. In terms of assembly, homodimer. Mg(2+) is required as a cofactor.

It is found in the cytoplasm. The catalysed reaction is Endonucleolytic cleavage to 5'-phosphomonoester.. Functionally, digests double-stranded RNA. Involved in the processing of primary rRNA transcript to yield the immediate precursors to the large and small rRNAs (23S and 16S). Processes some mRNAs, and tRNAs when they are encoded in the rRNA operon. Processes pre-crRNA and tracrRNA of type II CRISPR loci if present in the organism. This Chloroflexus aurantiacus (strain ATCC 29364 / DSM 637 / Y-400-fl) protein is Ribonuclease 3.